Here is a 195-residue protein sequence, read N- to C-terminus: ATP-dependent Clp protease proteolytic subunit 2 (195 aa).

Serine 92 (nucleophile) is an active-site residue. Histidine 117 is an active-site residue.

This sequence belongs to the peptidase S14 family. Fourteen ClpP subunits assemble into 2 heptameric rings which stack back to back to give a disk-like structure with a central cavity, resembling the structure of eukaryotic proteasomes.

It localises to the cytoplasm. It catalyses the reaction Hydrolysis of proteins to small peptides in the presence of ATP and magnesium. alpha-casein is the usual test substrate. In the absence of ATP, only oligopeptides shorter than five residues are hydrolyzed (such as succinyl-Leu-Tyr-|-NHMec, and Leu-Tyr-Leu-|-Tyr-Trp, in which cleavage of the -Tyr-|-Leu- and -Tyr-|-Trp bonds also occurs).. Functionally, cleaves peptides in various proteins in a process that requires ATP hydrolysis. Has a chymotrypsin-like activity. Plays a major role in the degradation of misfolded proteins. The protein is ATP-dependent Clp protease proteolytic subunit 2 of Rhodococcus jostii (strain RHA1).